The following is a 192-amino-acid chain: Signal peptidase complex catalytic subunit sec11 (192 aa).

At 1–18 (MLSFLSSNLSSTRQSMAQ) the chain is on the cytoplasmic side. The chain crosses the membrane as a helical; Signal-anchor for type II membrane protein span at residues 19-39 (VLNFALVLSTAFMLWKGLSVF). Residues 40–192 (TASSSPIVVV…GLMVILQREQ (153 aa)) lie on the Lumenal side of the membrane. Active-site charge relay system residues include Ser-53, His-92, and Asp-133. Positions 177–188 (VLLGIMGLMVIL) are C-terminal short (CTS) helix.

It belongs to the peptidase S26B family. As to quaternary structure, component of the signal peptidase complex (SPC) composed of a catalytic subunit SEC11 and three accessory subunits SPC1, SPC2 and SPC3. The complex induces a local thinning of the ER membrane which is used to measure the length of the signal peptide (SP) h-region of protein substrates. This ensures the selectivity of the complex towards h-regions shorter than 18-20 amino acids. SPC associates with the translocon complex.

It localises to the endoplasmic reticulum membrane. The catalysed reaction is Cleavage of hydrophobic, N-terminal signal or leader sequences from secreted and periplasmic proteins.. Its function is as follows. Catalytic component of the signal peptidase complex (SPC) which catalyzes the cleavage of N-terminal signal sequences from nascent proteins as they are translocated into the lumen of the endoplasmic reticulum. Specifically cleaves N-terminal signal peptides that contain a hydrophobic alpha-helix (h-region) shorter than 18-20 amino acids. In Aspergillus fumigatus (strain CBS 144.89 / FGSC A1163 / CEA10) (Neosartorya fumigata), this protein is Signal peptidase complex catalytic subunit sec11 (sec11).